A 151-amino-acid chain; its full sequence is UPF0178 protein YaiI (151 aa).

Belongs to the UPF0178 family.

The protein is UPF0178 protein YaiI of Salmonella agona (strain SL483).